We begin with the raw amino-acid sequence, 267 residues long: uncharacterized protein (267 aa).

The disordered stretch occupies residues 58 to 90; the sequence is RHTDDKQEKNQNEGEDNQKGENKTTDQQDGPKK. Transmembrane regions (helical) follow at residues 101 to 121 and 226 to 246; these read IYVL…LSQM and GMTT…AWLG.

It is found in the membrane. This is an uncharacterized protein from Caenorhabditis elegans.